A 190-amino-acid polypeptide reads, in one-letter code: Holliday junction branch migration complex subunit RuvA (190 aa).

Residues 1–65 are domain I; it reads MIGNLRGIVD…ENVTQLYGFI (65 aa). The segment at 66–143 is domain II; it reads SKEEQQCLRL…KLEINNNHFH (78 aa). The segment at 144 to 147 is flexible linker; it reads SISE. The domain III stretch occupies residues 147–190; the sequence is EDALSALINLGYERTKAYDTIKKIEDESPNLDTKDIIRMALKTI.

It belongs to the RuvA family. In terms of assembly, homotetramer. Forms an RuvA(8)-RuvB(12)-Holliday junction (HJ) complex. HJ DNA is sandwiched between 2 RuvA tetramers; dsDNA enters through RuvA and exits via RuvB. An RuvB hexamer assembles on each DNA strand where it exits the tetramer. Each RuvB hexamer is contacted by two RuvA subunits (via domain III) on 2 adjacent RuvB subunits; this complex drives branch migration. In the full resolvosome a probable DNA-RuvA(4)-RuvB(12)-RuvC(2) complex forms which resolves the HJ.

It localises to the cytoplasm. Functionally, the RuvA-RuvB-RuvC complex processes Holliday junction (HJ) DNA during genetic recombination and DNA repair, while the RuvA-RuvB complex plays an important role in the rescue of blocked DNA replication forks via replication fork reversal (RFR). RuvA specifically binds to HJ cruciform DNA, conferring on it an open structure. The RuvB hexamer acts as an ATP-dependent pump, pulling dsDNA into and through the RuvAB complex. HJ branch migration allows RuvC to scan DNA until it finds its consensus sequence, where it cleaves and resolves the cruciform DNA. The chain is Holliday junction branch migration complex subunit RuvA from Wolbachia pipientis subsp. Culex pipiens (strain wPip).